The primary structure comprises 194 residues: Protein GrpE (194 aa).

A disordered region spans residues 1-53 (MVENEKTSVEETEEKAETEDEMLTEDPSNEDSDEANEEGNELSEEEKRIAELE). Over residues 10–44 (EETEEKAETEDEMLTEDPSNEDSDEANEEGNELSE) the composition is skewed to acidic residues.

Belongs to the GrpE family. In terms of assembly, homodimer.

The protein localises to the cytoplasm. In terms of biological role, participates actively in the response to hyperosmotic and heat shock by preventing the aggregation of stress-denatured proteins, in association with DnaK and GrpE. It is the nucleotide exchange factor for DnaK and may function as a thermosensor. Unfolded proteins bind initially to DnaJ; upon interaction with the DnaJ-bound protein, DnaK hydrolyzes its bound ATP, resulting in the formation of a stable complex. GrpE releases ADP from DnaK; ATP binding to DnaK triggers the release of the substrate protein, thus completing the reaction cycle. Several rounds of ATP-dependent interactions between DnaJ, DnaK and GrpE are required for fully efficient folding. This Halalkalibacterium halodurans (strain ATCC BAA-125 / DSM 18197 / FERM 7344 / JCM 9153 / C-125) (Bacillus halodurans) protein is Protein GrpE.